The following is a 503-amino-acid chain: Alpha-1,3/1,6-mannosyltransferase ALG2 (503 aa).

The next 2 membrane-spanning stretches (helical) occupy residues 64–84 and 112–132; these read VYGD…FATI and TCIP…CHFP. 4 N-linked (GlcNAc...) asparagine glycosylation sites follow: asparagine 170, asparagine 303, asparagine 371, and asparagine 400. Residues 443-463 form a helical membrane-spanning segment; that stretch reads WEIFGISFSNFILHMAFIKIL.

This sequence belongs to the glycosyltransferase group 1 family. Glycosyltransferase 4 subfamily. As to quaternary structure, interacts with ALG1.

Its subcellular location is the endoplasmic reticulum membrane. The catalysed reaction is a beta-D-Man-(1-&gt;4)-beta-D-GlcNAc-(1-&gt;4)-alpha-D-GlcNAc-diphospho-di-trans,poly-cis-dolichol + GDP-alpha-D-mannose = an alpha-D-Man-(1-&gt;3)-beta-D-Man-(1-&gt;4)-beta-D-GlcNAc-(1-&gt;4)-alpha-D-GlcNAc-diphospho-di-trans,poly-cis-dolichol + GDP + H(+). It carries out the reaction an alpha-D-Man-(1-&gt;3)-beta-D-Man-(1-&gt;4)-beta-D-GlcNAc-(1-&gt;4)-alpha-D-GlcNAc-diphospho-di-trans,poly-cis-dolichol + GDP-alpha-D-mannose = an alpha-D-Man-(1-&gt;3)-[alpha-D-Man-(1-&gt;6)]-beta-D-Man-(1-&gt;4)-beta-D-GlcNAc-(1-&gt;4)-alpha-D-GlcNAc-diphospho-di-trans,poly-cis-dolichol + GDP + H(+). Its pathway is protein modification; protein glycosylation. Mannosylates Man(2)GlcNAc(2)-dolichol diphosphate and Man(1)GlcNAc(2)-dolichol diphosphate to form Man(3)GlcNAc(2)-dolichol diphosphate. This Saccharomyces cerevisiae (strain ATCC 204508 / S288c) (Baker's yeast) protein is Alpha-1,3/1,6-mannosyltransferase ALG2 (ALG2).